We begin with the raw amino-acid sequence, 139 residues long: Gonadotropin subunit beta-2 (139 aa).

A signal peptide spans 1-24 (MFPLVLSLFLGATSDIWPLAPAEA). 6 cysteine pairs are disulfide-bonded: C30/C78, C44/C93, C47/C131, C55/C109, C59/C111, and C114/C121. An N-linked (GlcNAc...) asparagine glycan is attached at N34.

It belongs to the glycoprotein hormones subunit beta family. Heterodimer of an alpha and a beta chain.

Its subcellular location is the secreted. Its function is as follows. Involved in gametogenesis and steroidogenesis. The chain is Gonadotropin subunit beta-2 (cgbb) from Morone saxatilis (Striped bass).